Reading from the N-terminus, the 215-residue chain is Myelin protein zero-like protein 2 (215 aa).

The signal sequence occupies residues 1–26; the sequence is MYGKSPALVLPLLLSLQLTALCPTEA. Residues 27–141 enclose the Ig-like V-type domain; that stretch reads VEIYTSGALE…DGLVGTIRLS (115 aa). The Extracellular portion of the chain corresponds to 27–154; that stretch reads VEIYTSGALE…TVPFSEIYFL (128 aa). N39 and N118 each carry an N-linked (GlcNAc...) asparagine glycan. C47 and C123 are oxidised to a cystine. Residues 155–175 traverse the membrane as a helical segment; it reads AVAIGSACALMIIVVIVVVLF. The Cytoplasmic segment spans residues 176 to 215; it reads QHFRKKRWADRADKAEGTKSKEEEKLNQGNKVSVFVEDTD. Basic and acidic residues predominate over residues 187 to 201; the sequence is ADKAEGTKSKEEEKL. The disordered stretch occupies residues 187–215; it reads ADKAEGTKSKEEEKLNQGNKVSVFVEDTD.

This sequence belongs to the myelin P0 protein family. As to expression, widely expressed. Expressed in the cochlea, in Deiters' cells, possibly at contact sites with the basilar membrane. Expressed in both outer and inner auditory hair cells. In the stria vascularis, detected in the basal cell layer. Not detected in thymocytes, lymphocytes, macrophage or dendritic cells.

The protein resides in the membrane. Mediates homophilic cell-cell adhesion. In Mus musculus (Mouse), this protein is Myelin protein zero-like protein 2 (Mpzl2).